We begin with the raw amino-acid sequence, 124 residues long: MaFF-interacting protein (124 aa).

Residues 54 to 96 (LVSEVEELYKSITALREKLLQAEQSLRNLKDIHMSLEKDVTAM) adopt a coiled-coil conformation.

It belongs to the tektin family. As to quaternary structure, interacts with MIS18A. Interacts (via its coiled-coil region) with MAFF. Strongly expressed in brain, kidney and ovary. Moderately expressed in liver, spleen, thymus, prostate, testis, small intestine and colon. Weakly expressed in heart, placenta, lung and leukocytes.

It is found in the cytoplasm. The protein resides in the nucleus. The protein localises to the nucleolus. Functionally, acts as a coactivator of MAFF transcriptional activity. Inhibits cell growth and colony-forming efficiency. This Homo sapiens (Human) protein is MaFF-interacting protein (MAFIP).